Consider the following 685-residue polypeptide: Polyphosphate kinase (685 aa).

Asparagine 45 serves as a coordination point for ATP. Mg(2+) contacts are provided by arginine 375 and arginine 405. Catalysis depends on histidine 435, which acts as the Phosphohistidine intermediate. ATP is bound by residues tyrosine 468, arginine 564, and histidine 592.

It belongs to the polyphosphate kinase 1 (PPK1) family. The cofactor is Mg(2+). Post-translationally, an intermediate of this reaction is the autophosphorylated ppk in which a phosphate is covalently linked to a histidine residue through a N-P bond.

It catalyses the reaction [phosphate](n) + ATP = [phosphate](n+1) + ADP. Functionally, catalyzes the reversible transfer of the terminal phosphate of ATP to form a long-chain polyphosphate (polyP). This Neisseria meningitidis serogroup A / serotype 4A (strain DSM 15465 / Z2491) protein is Polyphosphate kinase.